The following is a 273-amino-acid chain: Protein OPG070 (273 aa).

Transmembrane regions (helical) follow at residues 123 to 143 and 223 to 243; these read NEFI…LFWF and ISTI…LFYV.

It belongs to the orthopoxvirus OPG070 family. Post-translationally, phosphorylated by OPG054 kinase in vitro.

It localises to the virion. The protein resides in the host endoplasmic reticulum membrane. It is found in the host cytoplasm. Functionally, may play a role in the biogenesis of the viral factories by recruiting and wrapping DNA replication sites in endoplasmic reticulum derived membranes. Later in infection, phosphorylation by the late viral kinase OPG054 might decrease DNA-binding ability and trigger ER membranes disassembly. Binds DNA in vitro. The protein is Protein OPG070 (OPG070) of Variola virus (isolate Human/India/Ind3/1967) (VARV).